Consider the following 207-residue polypeptide: FMN-dependent NADH:quinone oxidoreductase 2 (207 aa).

FMN is bound by residues serine 10, 16–18, 96–99, and 141–144; these read SIS, MYNL, and SRGG.

Belongs to the azoreductase type 1 family. In terms of assembly, homodimer. FMN is required as a cofactor.

It catalyses the reaction 2 a quinone + NADH + H(+) = 2 a 1,4-benzosemiquinone + NAD(+). It carries out the reaction N,N-dimethyl-1,4-phenylenediamine + anthranilate + 2 NAD(+) = 2-(4-dimethylaminophenyl)diazenylbenzoate + 2 NADH + 2 H(+). Quinone reductase that provides resistance to thiol-specific stress caused by electrophilic quinones. Functionally, also exhibits azoreductase activity. Catalyzes the reductive cleavage of the azo bond in aromatic azo compounds to the corresponding amines. The sequence is that of FMN-dependent NADH:quinone oxidoreductase 2 from Trichormus variabilis (strain ATCC 29413 / PCC 7937) (Anabaena variabilis).